The sequence spans 510 residues: MKLAYWMYAGPAHIGTLRVASSFKNVHAIMHAPLGDDYFNVMRSMLERERDFTPVTASIVDRHVLARGSQNKVVENITRKDKEERPDLIVLTPTCTSSILQEDLQNFVDRASMDSESDVILADVNHYRVNELQAADRTLEQVVRFYIEKSKKQGDLNLTKTEKPSANILGIFTLGFHNQHDCRELKRLLQELGIEINEVIPEGGSVNNLKNLPRAWFNLVPYREVGLMTAIYLEKEFGMPYVSTTPMGVVDTATCIREIEKILNSFDKDVVVDFESYIDKQTRFVSQAAWFSRSIDCQNLTGKKAVVFGDATHAASMTKILAREMGINVACAGTYCKHDADWFKEQVQGYCDEVLITDDHTEVGDLIARIEPSAIFGTQMERHIGKRLNIPCGVISAPVHIQNFPLGYRPFLGYEGTNQIADLVYNSFTLGMEDHLLEIFGGHDTKEVITKSLSTEEGLTWTSDAQAELSKIPGFVRGKIKRNTEKFARENNISEINIEVMYAAKESLNA.

Residue D36 coordinates [4Fe-4S] cluster. Residue D296 is the Proton donor of the active site. 431-432 (GM) lines the substrate pocket.

The protein belongs to the ChlB/BchB/BchZ family. In terms of assembly, protochlorophyllide reductase is composed of three subunits; ChlL, ChlN and ChlB. Forms a heterotetramer of two ChlB and two ChlN subunits. [4Fe-4S] cluster serves as cofactor.

The protein localises to the plastid. The protein resides in the chloroplast. The enzyme catalyses chlorophyllide a + oxidized 2[4Fe-4S]-[ferredoxin] + 2 ADP + 2 phosphate = protochlorophyllide a + reduced 2[4Fe-4S]-[ferredoxin] + 2 ATP + 2 H2O. It participates in porphyrin-containing compound metabolism; chlorophyll biosynthesis (light-independent). Functionally, component of the dark-operative protochlorophyllide reductase (DPOR) that uses Mg-ATP and reduced ferredoxin to reduce ring D of protochlorophyllide (Pchlide) to form chlorophyllide a (Chlide). This reaction is light-independent. The NB-protein (ChlN-ChlB) is the catalytic component of the complex. The chain is Light-independent protochlorophyllide reductase subunit B from Chlorokybus atmophyticus (Soil alga).